The following is a 188-amino-acid chain: PRA1 family protein 3 (188 aa).

Met-1 is subject to N-acetylmethionine. The Cytoplasmic segment spans residues Met-1–Arg-35. 2 consecutive transmembrane segments (helical) span residues Val-36 to Ser-56 and Ile-57 to Phe-77. The Cytoplasmic portion of the chain corresponds to Thr-78 to Met-93. The next 2 membrane-spanning stretches (helical) occupy residues Lys-94–Ser-114 and Met-115–Ile-135. Residues Met-103–Gly-117 form a required for homodimer formation and heterodimer formation with ARL6IP1 region. The Cytoplasmic segment spans residues His-136–Glu-188. Residues His-136–Glu-188 are targeting to endoplasmic reticulum membrane.

It belongs to the PRA1 family. Homodimer. Heterodimer with ARL6IP1. Forms multimers. Interacts with ARL6. Interacts with prenylated RAB1A and RAB3A. Interacts with SLC1A1/EAAC1. Interacts with RTN2 (via first transmembrane domain). Does not interact with VAMP1, VAMP2 or VAMP3.

It localises to the endoplasmic reticulum membrane. Its subcellular location is the cell membrane. The protein resides in the cytoplasm. The protein localises to the cytoskeleton. Regulates intracellular concentrations of taurine and glutamate. Negatively modulates SLC1A1/EAAC1 glutamate transport activity by decreasing its affinity for glutamate in a PKC activity-dependent manner. Plays a role in the retention of SLC1A1/EAAC1 in the endoplasmic reticulum. The chain is PRA1 family protein 3 (ARL6IP5) from Homo sapiens (Human).